A 298-amino-acid chain; its full sequence is N-acetylmuramic acid 6-phosphate etherase (298 aa).

The 164-residue stretch at Ile55–Lys218 folds into the SIS domain. Catalysis depends on Glu83, which acts as the Proton donor. Glu114 is an active-site residue.

It belongs to the GCKR-like family. MurNAc-6-P etherase subfamily. As to quaternary structure, homodimer.

The catalysed reaction is N-acetyl-D-muramate 6-phosphate + H2O = N-acetyl-D-glucosamine 6-phosphate + (R)-lactate. It functions in the pathway amino-sugar metabolism; 1,6-anhydro-N-acetylmuramate degradation. Its pathway is amino-sugar metabolism; N-acetylmuramate degradation. It participates in cell wall biogenesis; peptidoglycan recycling. Specifically catalyzes the cleavage of the D-lactyl ether substituent of MurNAc 6-phosphate, producing GlcNAc 6-phosphate and D-lactate. Together with AnmK, is also required for the utilization of anhydro-N-acetylmuramic acid (anhMurNAc) either imported from the medium or derived from its own cell wall murein, and thus plays a role in cell wall recycling. The protein is N-acetylmuramic acid 6-phosphate etherase of Escherichia coli O8 (strain IAI1).